We begin with the raw amino-acid sequence, 180 residues long: Nucleoside-triphosphatase THEP1 (180 aa).

Residues 9–16 (GPAGVGKT) and 104–111 (LIVIDEIG) contribute to the ATP site.

It belongs to the THEP1 NTPase family.

It carries out the reaction a ribonucleoside 5'-triphosphate + H2O = a ribonucleoside 5'-diphosphate + phosphate + H(+). Its function is as follows. Has nucleotide phosphatase activity towards ATP, GTP, CTP, TTP and UTP. May hydrolyze nucleoside diphosphates with lower efficiency. The chain is Nucleoside-triphosphatase THEP1 from Thermococcus kodakarensis (strain ATCC BAA-918 / JCM 12380 / KOD1) (Pyrococcus kodakaraensis (strain KOD1)).